Reading from the N-terminus, the 274-residue chain is Large ribosomal subunit protein uL2 (274 aa).

The tract at residues 224–259 (AMNPVDHPHGGGEGRTSGGRHPVTPWGIPTKGYKTR) is disordered.

This sequence belongs to the universal ribosomal protein uL2 family. As to quaternary structure, part of the 50S ribosomal subunit. Forms a bridge to the 30S subunit in the 70S ribosome.

Its function is as follows. One of the primary rRNA binding proteins. Required for association of the 30S and 50S subunits to form the 70S ribosome, for tRNA binding and peptide bond formation. It has been suggested to have peptidyltransferase activity; this is somewhat controversial. Makes several contacts with the 16S rRNA in the 70S ribosome. This Citrifermentans bemidjiense (strain ATCC BAA-1014 / DSM 16622 / JCM 12645 / Bem) (Geobacter bemidjiensis) protein is Large ribosomal subunit protein uL2.